Here is an 87-residue protein sequence, read N- to C-terminus: Small ribosomal subunit protein eS21 (87 aa).

It belongs to the eukaryotic ribosomal protein eS21 family. In terms of assembly, component of the small ribosomal subunit. Mature ribosomes consist of a small (40S) and a large (60S) subunit. The 40S subunit contains about 33 different proteins and 1 molecule of RNA (18S). The 60S subunit contains about 49 different proteins and 3 molecules of RNA (25S, 5.8S and 5S).

It is found in the cytoplasm. Required for the processing of the 20S rRNA-precursor to mature 18S rRNA in a late step of the maturation of 40S ribosomal subunits. Has a physiological role leading to 18S rRNA stability. In Eremothecium gossypii (strain ATCC 10895 / CBS 109.51 / FGSC 9923 / NRRL Y-1056) (Yeast), this protein is Small ribosomal subunit protein eS21 (RPS21).